Here is a 270-residue protein sequence, read N- to C-terminus: L-aspartate dehydrogenase (270 aa).

NAD(+)-binding residues include A123 and N191. Residue H221 is part of the active site.

The protein belongs to the L-aspartate dehydrogenase family.

It carries out the reaction L-aspartate + NADP(+) + H2O = oxaloacetate + NH4(+) + NADPH + H(+). It catalyses the reaction L-aspartate + NAD(+) + H2O = oxaloacetate + NH4(+) + NADH + H(+). Its pathway is cofactor biosynthesis; NAD(+) biosynthesis; iminoaspartate from L-aspartate (dehydrogenase route): step 1/1. In terms of biological role, specifically catalyzes the NAD or NADP-dependent dehydrogenation of L-aspartate to iminoaspartate. This is L-aspartate dehydrogenase from Methanocella arvoryzae (strain DSM 22066 / NBRC 105507 / MRE50).